Here is a 341-residue protein sequence, read N- to C-terminus: Two-component response regulator EHD1 (341 aa).

Residues 12–127 (RVLVIDDDCS…ELSNIWQHIF (116 aa)) form the Response regulatory domain. Residue Asp-63 is modified to 4-aspartylphosphate. The 60-residue stretch at 195 to 254 (DLGKSRLTWTTQLHRQFIAAVNHLGEDKAVPKKILGIMKVKHLTREQVASHLQKYRMQLK) folds into the HTH myb-type domain. The segment at residues 225-250 (PKKILGIMKVKHLTREQVASHLQKYR) is a DNA-binding region (H-T-H motif).

Two-component system major event consists of a His-to-Asp phosphorelay between a sensor histidine kinase (HK) and a response regulator (RR). In plants, the His-to-Asp phosphorelay involves an additional intermediate named Histidine-containing phosphotransfer protein (HPt). This multistep phosphorelay consists of a His-Asp-His-Asp sequential transfer of a phosphate group between first a His and an Asp of the HK protein, followed by the transfer to a conserved His of the HPt protein and finally the transfer to an Asp in the receiver domain of the RR protein.

The protein resides in the nucleus. Transcriptional activator that acts as a floral inducer to promote short-day (SD) flowering pathway. Activates Hd3a and other FT-like genes independently from Hd1. May also activate MADS-box transcription factors involved in flowering regulation. The chain is Two-component response regulator EHD1 (EHD1) from Oryza sativa subsp. indica (Rice).